We begin with the raw amino-acid sequence, 183 residues long: GTP cyclohydrolase 1 (183 aa).

Residues C71, H74, and C142 each coordinate Zn(2+).

It belongs to the GTP cyclohydrolase I family. Toroid-shaped homodecamer, composed of two pentamers of five dimers.

The catalysed reaction is GTP + H2O = 7,8-dihydroneopterin 3'-triphosphate + formate + H(+). It functions in the pathway cofactor biosynthesis; 7,8-dihydroneopterin triphosphate biosynthesis; 7,8-dihydroneopterin triphosphate from GTP: step 1/1. The polypeptide is GTP cyclohydrolase 1 (Leptospira borgpetersenii serovar Hardjo-bovis (strain JB197)).